We begin with the raw amino-acid sequence, 34 residues long: Photosystem II reaction center protein Psb30 (34 aa).

Residues 6–26 form a helical membrane-spanning segment; that stretch reads VIAQLVSLGVIVLVGPAVIIL.

Belongs to the Psb30/Ycf12 family. In terms of assembly, PSII is composed of 1 copy each of membrane proteins PsbA, PsbB, PsbC, PsbD, PsbE, PsbF, PsbH, PsbI, PsbJ, PsbK, PsbL, PsbM, PsbT, PsbX, PsbY, PsbZ, Psb30/Ycf12, peripheral proteins of the oxygen-evolving complex and a large number of cofactors. It forms dimeric complexes.

Its subcellular location is the plastid. It localises to the chloroplast thylakoid membrane. A core subunit of photosystem II (PSII), probably helps stabilize the reaction center. This is Photosystem II reaction center protein Psb30 from Pyropia yezoensis (Susabi-nori).